Here is a 569-residue protein sequence, read N- to C-terminus: Laccase-6 (569 aa).

The first 29 residues, methionine 1–alanine 29, serve as a signal peptide directing secretion. Plastocyanin-like domains are found at residues lysine 37–serine 153 and asparagine 163–alanine 315. A glycan (N-linked (GlcNAc...) asparagine) is linked at asparagine 83. Positions 87, 89, 132, and 134 each coordinate Cu cation. Residues asparagine 208, asparagine 303, asparagine 319, asparagine 392, asparagine 438, and asparagine 444 are each glycosylated (N-linked (GlcNAc...) asparagine). The 137-residue stretch at aspartate 417 to lysine 553 folds into the Plastocyanin-like 3 domain. Residues histidine 472, histidine 475, histidine 477, histidine 532, cysteine 533, histidine 534, histidine 538, and methionine 543 each coordinate Cu cation.

It belongs to the multicopper oxidase family. Requires Cu cation as cofactor. As to expression, predominantly expressed in the inflorescence stem, but not in siliques.

It localises to the secreted. Its subcellular location is the extracellular space. The protein resides in the apoplast. The enzyme catalyses 4 hydroquinone + O2 = 4 benzosemiquinone + 2 H2O. In terms of biological role, lignin degradation and detoxification of lignin-derived products. The sequence is that of Laccase-6 (LAC6) from Arabidopsis thaliana (Mouse-ear cress).